A 156-amino-acid chain; its full sequence is Transcriptional regulator MraZ (156 aa).

SpoVT-AbrB domains follow at residues 7–54 (NIEV…PESV) and 84–127 (VEVV…AKER).

The protein belongs to the MraZ family. As to quaternary structure, forms oligomers.

The protein localises to the cytoplasm. It is found in the nucleoid. The sequence is that of Transcriptional regulator MraZ from Bacteroides thetaiotaomicron (strain ATCC 29148 / DSM 2079 / JCM 5827 / CCUG 10774 / NCTC 10582 / VPI-5482 / E50).